The primary structure comprises 670 residues: Proline-rich receptor-like protein kinase PERK5 (670 aa).

A disordered region spans residues 1–181 (MADSPVDSSP…SGDSDSSSGN (181 aa)). Residues 1-186 (MADSPVDSSP…SSSGNHPQAN (186 aa)) are Extracellular-facing. Over residues 14-31 (TSNGTPPSNGTSPSNESS) the composition is skewed to low complexity. 2 N-linked (GlcNAc...) asparagine glycosylation sites follow: N22 and N28. Pro residues-rich tracts occupy residues 32–62 (PPTP…PAPP) and 84–109 (PQTP…PPQT). The N-linked (GlcNAc...) asparagine glycan is linked to N130. The segment covering 132–141 (TNGGNNNRDG) has biased composition (low complexity). N-linked (GlcNAc...) asparagine glycosylation occurs at N151. Over residues 167 to 181 (SPPQNSGDSDSSSGN) the composition is skewed to low complexity. Residues 187-207 (IGLIIGVLVGAGLLLLLAVCI) traverse the membrane as a helical segment. The Cytoplasmic portion of the chain corresponds to 208–670 (CICCNRKKKK…RGSMKRNPQL (463 aa)). T301 is modified (phosphothreonine). In terms of domain architecture, Protein kinase spans 312–590 (FAQSNLLGQG…VRALEGDMSM (279 aa)). ATP contacts are provided by residues 318–326 (LGQGGFGYV) and K340. Phosphotyrosine is present on Y385. The active-site Proton acceptor is D436. Phosphoserine is present on S469. Residues T470 and T475 each carry the phosphothreonine modification. The residue at position 483 (Y483) is a Phosphotyrosine. 2 disordered regions span residues 589 to 613 (SMDD…VSSE) and 635 to 670 (EYQS…NPQL). Positions 599–613 (PGQSTYLSPGSVSSE) are enriched in polar residues.

The protein belongs to the protein kinase superfamily. Ser/Thr protein kinase family. Mostly expressed in flower buds.

Its subcellular location is the cell membrane. It carries out the reaction L-seryl-[protein] + ATP = O-phospho-L-seryl-[protein] + ADP + H(+). The enzyme catalyses L-threonyl-[protein] + ATP = O-phospho-L-threonyl-[protein] + ADP + H(+). The protein is Proline-rich receptor-like protein kinase PERK5 (PERK5) of Arabidopsis thaliana (Mouse-ear cress).